Consider the following 371-residue polypeptide: MGLKKACLTVLCLIVFCFGIFYTFDRVNQGERNAVSLLKDKLFNEEGEPVNLIFCYTILQMKVAERIMAQHPGERFYVVLMSENRNEKYDYYFNQIKDKAERAYFFHLPYGLNKSFNFIPTMAELKVKSMLLPKVKRIYLASLEKVSIAAFLSTYPDAEIKTFDDGTGNLIQSSSYLGDEFSVNGTIKRNFARMMIGDWSIAKTRNASDEHYTIFKGLKNIMDDGRRKMTYLPLFDASELKAGDETGGTVRILLGSPDKEMKEISEKAAKNFNIQYVAPHPRQTYGLSGVTTLNSPYVIEDYILREIKKNPHTRYEIYTFFSGAALTMKDFPNVHVYALKPASLPEDYWLKPVYALFTQSGIPILTFDDKD.

Glycine 255 is a CMP-N-acetyl-beta-neuraminate binding site. Aspartate 258 (proton acceptor) is an active-site residue. Residues 278-282 (APHPR), 299-300 (IE), and 322-323 (SG) contribute to the CMP-N-acetyl-beta-neuraminate site. The active-site Proton donor is the histidine 280.

It belongs to the glycosyltransferase 52 family. Homodimer.

It localises to the cell outer membrane. It carries out the reaction a beta-D-galactosyl-(1-&gt;4)-N-acetyl-beta-D-glucosaminyl derivative + CMP-N-acetyl-beta-neuraminate = an N-acetyl-alpha-neuraminyl-(2-&gt;3)-beta-D-galactosyl-(1-&gt;4)-N-acetyl-beta-D-glucosaminyl derivative + CMP + H(+). The protein operates within bacterial outer membrane biogenesis; lipooligosaccharide biosynthesis. In terms of biological role, catalyzes the transfer of sialic acid from the substrate CMP-N-acetylneuraminate to the terminal galactose residue of the lacto-N-neotetraose branch of surface lipooligosaccharide (LOS), forming an alpha-2,3-sialyl linkage. Thus, functions in the sialylation of LOS, which plays a role in the evasion of the host immune response by protecting N.meningitidis from complement-mediated serum killing and from phagocytic killing by neutrophils. In Neisseria meningitidis serogroup A / serotype 4A (strain DSM 15465 / Z2491), this protein is N-acetyllactosaminide alpha-2,3-sialyltransferase.